Consider the following 611-residue polypeptide: Leucine aminopeptidase (611 aa).

Substrate contacts are provided by residues 129-131 (QCQ) and 278-282 (GGMEN). Position 305 (histidine 305) interacts with Zn(2+). Glutamate 306 (proton acceptor) is an active-site residue. Positions 309 and 328 each coordinate Zn(2+). Tyrosine 393 (proton donor) is an active-site residue. Residue 562–564 (RMK) participates in substrate binding.

It belongs to the peptidase M1 family. The cofactor is Zn(2+).

The protein localises to the cytoplasm. It catalyses the reaction an epoxide + H2O = an ethanediol. In terms of biological role, aminopeptidase that preferentially cleaves di- and tripeptides. Also has low epoxide hydrolase activity (in vitro). Can hydrolyze the epoxide leukotriene LTA(4) but it forms preferentially 5,6-dihydroxy-7,9,11,14-eicosatetraenoic acid rather than the cytokine leukotriene B(4) as the product compared to the homologous mammalian enzyme (in vitro). This chain is Leucine aminopeptidase (LKHA4), found in Oryza sativa subsp. japonica (Rice).